An 89-amino-acid polypeptide reads, in one-letter code: Small ribosomal subunit protein uS14A (89 aa).

Residues 34–54 form a disordered region; that stretch reads ESLRKLPRDSNPNRLKNRDKI.

Belongs to the universal ribosomal protein uS14 family. As to quaternary structure, part of the 30S ribosomal subunit. Contacts proteins S3 and S10.

In terms of biological role, binds 16S rRNA, required for the assembly of 30S particles and may also be responsible for determining the conformation of the 16S rRNA at the A site. This Streptococcus pyogenes serotype M1 protein is Small ribosomal subunit protein uS14A.